A 75-amino-acid chain; its full sequence is Iota-conotoxin-like R11.3 (75 aa).

An N-terminal signal peptide occupies residues 1–19 (MKLCLTFLLVLMILASVTG). Residues 20–34 (EKLSEQTLRRAARKN) constitute a propeptide that is removed on maturation. 4 disulfides stabilise this stretch: Cys39-Cys53, Cys46-Cys58, Cys52-Cys63, and Cys57-Cys70.

This sequence belongs to the conotoxin I1 superfamily. Expressed by the venom duct.

It localises to the secreted. Functionally, iota-conotoxins bind to voltage-gated sodium channels (Nav) and act as agonists by shifting the voltage-dependence of activation to more hyperpolarized levels. Produces general excitatory symptoms. The sequence is that of Iota-conotoxin-like R11.3 from Conus radiatus (Rayed cone).